Here is a 538-residue protein sequence, read N- to C-terminus: Chaperonin GroEL (538 aa).

ATP is bound by residues 29–32 (TLGP), 86–90 (DGTTT), glycine 413, 479–481 (DAL), and aspartate 495.

It belongs to the chaperonin (HSP60) family. Forms a cylinder of 14 subunits composed of two heptameric rings stacked back-to-back. Interacts with the co-chaperonin GroES.

It is found in the cytoplasm. The enzyme catalyses ATP + H2O + a folded polypeptide = ADP + phosphate + an unfolded polypeptide.. Its function is as follows. Together with its co-chaperonin GroES, plays an essential role in assisting protein folding. The GroEL-GroES system forms a nano-cage that allows encapsulation of the non-native substrate proteins and provides a physical environment optimized to promote and accelerate protein folding. This chain is Chaperonin GroEL, found in Thermotoga petrophila (strain ATCC BAA-488 / DSM 13995 / JCM 10881 / RKU-1).